The primary structure comprises 231 residues: 2-C-methyl-D-erythritol 4-phosphate cytidylyltransferase (231 aa).

This sequence belongs to the IspD/TarI cytidylyltransferase family. IspD subfamily.

It catalyses the reaction 2-C-methyl-D-erythritol 4-phosphate + CTP + H(+) = 4-CDP-2-C-methyl-D-erythritol + diphosphate. The protein operates within isoprenoid biosynthesis; isopentenyl diphosphate biosynthesis via DXP pathway; isopentenyl diphosphate from 1-deoxy-D-xylulose 5-phosphate: step 2/6. Functionally, catalyzes the formation of 4-diphosphocytidyl-2-C-methyl-D-erythritol from CTP and 2-C-methyl-D-erythritol 4-phosphate (MEP). The polypeptide is 2-C-methyl-D-erythritol 4-phosphate cytidylyltransferase (Pseudoalteromonas atlantica (strain T6c / ATCC BAA-1087)).